A 484-amino-acid polypeptide reads, in one-letter code: Phosphoenolpyruvate carboxylase (484 aa).

Belongs to the PEPCase type 2 family. As to quaternary structure, homotetramer. The cofactor is Mg(2+).

It catalyses the reaction oxaloacetate + phosphate = phosphoenolpyruvate + hydrogencarbonate. In terms of biological role, catalyzes the irreversible beta-carboxylation of phosphoenolpyruvate (PEP) to form oxaloacetate (OAA), a four-carbon dicarboxylic acid source for the tricarboxylic acid cycle. The chain is Phosphoenolpyruvate carboxylase from Methanospirillum hungatei JF-1 (strain ATCC 27890 / DSM 864 / NBRC 100397 / JF-1).